Here is a 290-residue protein sequence, read N- to C-terminus: MRLGIHTFTSGSLETAALTAGDLGAATFQIFSASPRMWRARVPDPVQIKLLCAARERFSLSPLVIHTNYLVNLASLDPVIRAKSIDAFRGELQRAIAIGAEYLVVHPGSYRGHTVEEGIAAFALGLRDASAGLPPHQLTVLLENTAGAGCHLGGKFEELRSIRDLTAELTDLPIGYCLDTCHLLAAGFDIVTAPGLRATLRAAEAVLGLANVHVFHANDSRFPRGSHVDRHAHIGEGFIGADAFRRILTHPKLRRKPFILETPVDEPGDDRRNLDILKSLAGSKLPLPAR.

Positions 66, 106, 143, 179, 182, 216, 229, 231, and 261 each coordinate Zn(2+).

Belongs to the AP endonuclease 2 family. The cofactor is Zn(2+).

It catalyses the reaction Endonucleolytic cleavage to 5'-phosphooligonucleotide end-products.. Functionally, endonuclease IV plays a role in DNA repair. It cleaves phosphodiester bonds at apurinic or apyrimidinic (AP) sites, generating a 3'-hydroxyl group and a 5'-terminal sugar phosphate. In Solibacter usitatus (strain Ellin6076), this protein is Probable endonuclease 4.